The sequence spans 296 residues: mRNA 3'-end-processing protein RNA15 (296 aa).

Residues 18 to 96 form the RRM domain; that stretch reads RVVYLGSIPY…RFLKCGYSSN (79 aa). The segment at 99–140 is disordered; that stretch reads ISGVSQQQQQQYNNINGNNNNNGNNNNNSNGPDFQNSGNANF. The segment covering 100–135 has biased composition (low complexity); the sequence is SGVSQQQQQQYNNINGNNNNNGNNNNNSNGPDFQNS.

In terms of assembly, component of the CFIA complex, which is composed of RNA14, RNA15, PCF11 and CLP1. Interacts directly with RNA14. Interacts with polyadenylate-binding protein PAB1.

Its subcellular location is the nucleus. Functionally, RNA-binding component of the cleavage factor IA (CFIA) complex, which is involved in the endonucleolytic cleavage during polyadenylation-dependent pre-mRNA 3'-end formation and cooperates with the cleavage factor NAB4/CFIB and the cleavage and polyadenylation factor (CPF) complex. Binds to A-rich RNA sequence elements. The polypeptide is mRNA 3'-end-processing protein RNA15 (RNA15) (Saccharomyces cerevisiae (strain ATCC 204508 / S288c) (Baker's yeast)).